We begin with the raw amino-acid sequence, 312 residues long: Glyoxylate/hydroxypyruvate reductase A (312 aa).

The active site involves Arg227. Residue His275 is the Proton donor of the active site.

It belongs to the D-isomer specific 2-hydroxyacid dehydrogenase family. GhrA subfamily.

Its subcellular location is the cytoplasm. The enzyme catalyses glycolate + NADP(+) = glyoxylate + NADPH + H(+). It carries out the reaction (R)-glycerate + NAD(+) = 3-hydroxypyruvate + NADH + H(+). It catalyses the reaction (R)-glycerate + NADP(+) = 3-hydroxypyruvate + NADPH + H(+). Catalyzes the NADPH-dependent reduction of glyoxylate and hydroxypyruvate into glycolate and glycerate, respectively. This is Glyoxylate/hydroxypyruvate reductase A from Salmonella dublin (strain CT_02021853).